Reading from the N-terminus, the 404-residue chain is S-adenosylmethionine synthase (404 aa).

An ATP-binding site is contributed by 139 to 144 (GKGSTD).

It belongs to the AdoMet synthase 2 family. Requires Mg(2+) as cofactor.

The catalysed reaction is L-methionine + ATP + H2O = S-adenosyl-L-methionine + phosphate + diphosphate. Its pathway is amino-acid biosynthesis; S-adenosyl-L-methionine biosynthesis; S-adenosyl-L-methionine from L-methionine: step 1/1. Its function is as follows. Catalyzes the formation of S-adenosylmethionine from methionine and ATP. The protein is S-adenosylmethionine synthase of Saccharolobus islandicus (strain Y.N.15.51 / Yellowstone #2) (Sulfolobus islandicus).